The sequence spans 804 residues: Probable cadmium-transporting ATPase (804 aa).

HMA domains lie at 11–74 (DKQV…LKVA) and 89–152 (DKNV…LKVI). Residues Cys-22, Cys-25, Cys-100, and Cys-103 each contribute to the Cd(2+) site. 5 helical membrane passes run 183 to 203 (STLL…FVNG), 207 to 227 (LVTS…LFKV), 248 to 268 (IGAA…LFAI), 413 to 433 (IIMV…GGSW), and 441 to 461 (LAVL…ISIV). Asp-492 acts as the 4-aspartylphosphate intermediate in catalysis. Helical transmembrane passes span 749-771 (LNII…LLVI) and 776-798 (TLWI…SLRL).

Belongs to the cation transport ATPase (P-type) (TC 3.A.3) family. Type IB subfamily.

The protein localises to the cell membrane. It catalyses the reaction Cd(2+)(in) + ATP + H2O = Cd(2+)(out) + ADP + phosphate + H(+). Couples the hydrolysis of ATP with the export of cadmium. Involved in cadmium resistance. The chain is Probable cadmium-transporting ATPase (cadA) from Staphylococcus aureus.